Consider the following 179-residue polypeptide: Large ribosomal subunit protein uL6 (179 aa).

Belongs to the universal ribosomal protein uL6 family. Part of the 50S ribosomal subunit.

In terms of biological role, this protein binds to the 23S rRNA, and is important in its secondary structure. It is located near the subunit interface in the base of the L7/L12 stalk, and near the tRNA binding site of the peptidyltransferase center. The chain is Large ribosomal subunit protein uL6 from Methylacidiphilum infernorum (isolate V4) (Methylokorus infernorum (strain V4)).